Consider the following 100-residue polypeptide: Urease subunit gamma (100 aa).

It belongs to the urease gamma subunit family. Heterotrimer of UreA (gamma), UreB (beta) and UreC (alpha) subunits. Three heterotrimers associate to form the active enzyme.

The protein resides in the cytoplasm. It carries out the reaction urea + 2 H2O + H(+) = hydrogencarbonate + 2 NH4(+). It participates in nitrogen metabolism; urea degradation; CO(2) and NH(3) from urea (urease route): step 1/1. This is Urease subunit gamma from Paraburkholderia phymatum (strain DSM 17167 / CIP 108236 / LMG 21445 / STM815) (Burkholderia phymatum).